Consider the following 413-residue polypeptide: Hemolin (413 aa).

The first 18 residues, 1–18 (MVSKSIVALAACVAMCVA), serve as a signal peptide directing secretion. 4 consecutive Ig-like C2-type domains span residues 25–112 (PVLK…HIIS), 121–215 (PTTF…LVGY), 233–322 (PMYV…VKLT), and 327–411 (PRFT…TLVI). 4 cysteine pairs are disulfide-bonded: Cys-46–Cys-97, Cys-141–Cys-199, Cys-252–Cys-305, and Cys-349–Cys-395. Asn-283 carries an N-linked (GlcNAc...) asparagine glycan.

Belongs to the hemolin family. As to expression, hemolymph.

The protein localises to the secreted. In terms of biological role, insect-immune protein with antimicrobial activity. Forms a protein complex at the bacterial surface. Can inhibit hemocyte aggregation. This Manduca sexta (Tobacco hawkmoth) protein is Hemolin.